Reading from the N-terminus, the 388-residue chain is Processive diacylglycerol beta-glucosyltransferase (388 aa).

The protein belongs to the glycosyltransferase 28 family. UgtP subfamily.

It is found in the cell membrane. It carries out the reaction a 1,2-diacyl-3-O-(beta-D-glucopyranosyl)-sn-glycerol + UDP-alpha-D-glucose = a 1,2-diacyl-3-O-(beta-D-Glc-(1-&gt;6)-beta-D-Glc)-sn-glycerol + UDP + H(+). The enzyme catalyses a 1,2-diacyl-3-O-(beta-D-Glc-(1-&gt;6)-beta-D-Glc)-sn-glycerol + UDP-alpha-D-glucose = a 1,2-diacyl-3-O-(beta-D-Glc-(1-&gt;6)-beta-D-Glc-(1-&gt;6)-beta-D-Glc)-sn-glycerol + UDP + H(+). The catalysed reaction is a 1,2-diacyl-sn-glycerol + UDP-alpha-D-glucose = a 1,2-diacyl-3-O-(beta-D-glucopyranosyl)-sn-glycerol + UDP + H(+). It functions in the pathway glycolipid metabolism; diglucosyl-diacylglycerol biosynthesis. Processive glucosyltransferase involved in the biosynthesis of both the bilayer- and non-bilayer-forming membrane glucolipids. Is able to successively transfer up to three glucosyl residues to diacylglycerol (DAG), thereby catalyzing the formation of beta-monoglucosyl-DAG (3-O-(beta-D-glucopyranosyl)-1,2-diacyl-sn-glycerol), beta-diglucosyl-DAG (3-O-(beta-D-glucopyranosyl-beta-(1-&gt;6)-D-glucopyranosyl)-1,2-diacyl-sn-glycerol) and beta-triglucosyl-DAG (3-O-(beta-D-glucopyranosyl-beta-(1-&gt;6)-D-glucopyranosyl-beta-(1-&gt;6)-D-glucopyranosyl)-1,2-diacyl-sn-glycerol). Beta-diglucosyl-DAG is the predominant glycolipid found in Bacillales and is also used as a membrane anchor for lipoteichoic acid (LTA). The chain is Processive diacylglycerol beta-glucosyltransferase from Bacillus cereus (strain G9842).